The sequence spans 300 residues: Dipeptide transport system permease protein DppC (300 aa).

Residues 1 to 31 (MSQVTENKVISAPVPMTPLQEFWHYFKRNKG) lie on the Cytoplasmic side of the membrane. Residues 32 to 52 (AVVGLVYVVIVLFIAIFANWI) traverse the membrane as a helical segment. At 53 to 101 (APYNPAEQFRDALLAPPAWQEGGSMAHLLGTDDVGRDVLSRLMYGARLS) the chain is on the periplasmic side. Residues 98–287 (ARLSLLVGCL…LTVLAFNLMG (190 aa)) form the ABC transmembrane type-1 domain. A helical membrane pass occupies residues 102–122 (LLVGCLVVVLSLIMGVILGLI). At 123-136 (AGYFGGLVDNIIMR) the chain is on the cytoplasmic side. Residues 137 to 157 (VVDIMLALPSLLLALVLVAIF) traverse the membrane as a helical segment. Residues 158–206 (GPSIGNAALALTFVALPHYVRLTRAAVLVEVNRDYVTASRVAGAGAMRQ) lie on the Periplasmic side of the membrane. Residues 207-227 (MFINIFPNCLAPLIVQASLGF) traverse the membrane as a helical segment. The Cytoplasmic segment spans residues 228–230 (SNA). The chain crosses the membrane as a helical span at residues 231-251 (ILDMAALGFLGMGAQPPTPEW). Over 252–265 (GTMLSDVLQFAQSA) the chain is Periplasmic. A helical transmembrane segment spans residues 266–286 (WWVVTFPGLAILLTVLAFNLM). The Cytoplasmic segment spans residues 287–300 (GDGLRDALDPKLKQ).

It belongs to the binding-protein-dependent transport system permease family. OppBC subfamily. In terms of assembly, the complex is composed of two ATP-binding proteins (DppD and DppF), two transmembrane proteins (DppB and DppC) and a solute-binding protein (DppA).

The protein resides in the cell inner membrane. In terms of biological role, part of the ABC transporter DppABCDF involved in dipeptide transport. Responsible for the translocation of the substrate across the membrane. The sequence is that of Dipeptide transport system permease protein DppC (dppC) from Escherichia coli O157:H7.